A 521-amino-acid polypeptide reads, in one-letter code: Importin subunit alpha-4 (521 aa).

The segment at 1 to 29 is disordered; the sequence is MAENPSLENHRIKSFKNKGRDVETMRRHR. At Ala2 the chain carries N-acetylalanine. Residues 2–58 form the IBB domain; sequence AENPSLENHRIKSFKNKGRDVETMRRHRNEVTVELRKNKRDEHLLKKRNVPQEESLE. Positions 18–29 are enriched in basic and acidic residues; sequence KGRDVETMRRHR. A Nuclear localization signal motif is present at residues 43-52; the sequence is EHLLKKRNVP. Phosphoserine occurs at positions 56 and 60. The stretch at 66–106 is one ARM 1; truncated repeat; that stretch reads FKAQNVTLEAILQNATSDNPVVQLSAVQAARKLLSSDRNPP. ARM repeat units lie at residues 107 to 149, 150 to 194, 195 to 233, 234 to 278, 279 to 318, 319 to 360, 361 to 400, and 401 to 443; these read IDDL…TSAQ, TQAV…CRDY, VISLGVVKPLLSFISPSIPITFLRNVTWVIVNLCRNKDP, PPPM…EQIQ, MVIDSGVVPFLVPLLSHQEVKVQTAALRAVGNIVTGTDEQ, TQVV…NQQQ, VQAVIDAGLIPMIIHQLAKGDFGTQKEAAWAISNLTISGR, and KDQV…IMAG. Residues 137 to 229 form an NLS binding site (major) region; it reads WALTNIASGT…VTWVIVNLCR (93 aa). The tract at residues 306–394 is NLS binding site (minor); it reads RAVGNIVTGT…QKEAAWAISN (89 aa). Residues 447-485 form an ARM 10; atypical repeat; that stretch reads STIAEIIEECGGLEKIEVLQQHENEDIYKLAFEIIDQYF. At Tyr484 the chain carries Phosphotyrosine.

The protein belongs to the importin alpha family. Forms a complex with importin subunit beta-1. Interacts with DDX21. Interacts with NCBP1, NCBP2/CBP20 and NCBP3. Interacts with RCC1. Interacts with ZC3H11A. In terms of assembly, (Microbial infection) Interacts with HIV-1 integrase; this interaction might play a role in nuclear import of HIV pre-integration complex. As to quaternary structure, (Microbial infection) Interacts with influenza virus nucleoprotein; this interaction might play a role in nuclear import of viral genome. Ubiquitous. Highest levels in heart and skeletal muscle.

The protein resides in the cytoplasm. It localises to the nucleus. In terms of biological role, functions in nuclear protein import as an adapter protein for nuclear receptor KPNB1. Binds specifically and directly to substrates containing either a simple or bipartite NLS motif. Docking of the importin/substrate complex to the nuclear pore complex (NPC) is mediated by KPNB1 through binding to nucleoporin FxFG repeats and the complex is subsequently translocated through the pore by an energy requiring, Ran-dependent mechanism. At the nucleoplasmic side of the NPC, Ran binds to importin-beta and the three components separate and importin-alpha and -beta are re-exported from the nucleus to the cytoplasm where GTP hydrolysis releases Ran from importin. The directionality of nuclear import is thought to be conferred by an asymmetric distribution of the GTP- and GDP-bound forms of Ran between the cytoplasm and nucleus. In vitro, mediates the nuclear import of human cytomegalovirus UL84 by recognizing a non-classical NLS. Recognizes NLSs of influenza A virus nucleoprotein probably through ARM repeats 7-9. This is Importin subunit alpha-4 (KPNA3) from Homo sapiens (Human).